We begin with the raw amino-acid sequence, 2310 residues long: Peroxide stress-activated histidine kinase mak2 (2310 aa).

Residues 12 to 292 enclose the Protein kinase domain; it reads DYAISQLGEF…SATDLCYTIV (281 aa). The GAF domain occupies 1450-1592; that stretch reads RLGPLLTTVI…LLSQQIAISV (143 aa). A Histidine kinase domain is found at 1760–1986; the sequence is NMSHELRTPF…TFWFHVQLRN (227 aa). Phosphohistidine; by autocatalysis is present on H1763. A Response regulatory domain is found at 2180–2303; it reads YALIAEDNLI…QLVNAVREFV (124 aa). D2232 carries the 4-aspartylphosphate modification.

The protein localises to the cytoplasm. The enzyme catalyses ATP + protein L-histidine = ADP + protein N-phospho-L-histidine.. Functionally, involved in the control of the SAPK-dependent transcriptional response to peroxide stress. Regulates sty1 activity. The polypeptide is Peroxide stress-activated histidine kinase mak2 (mak2) (Schizosaccharomyces pombe (strain 972 / ATCC 24843) (Fission yeast)).